A 160-amino-acid chain; its full sequence is Transcription elongation factor GreA (160 aa).

The stretch at 2–30 forms a coiled coil; that stretch reads SEKTYPMTLAEKEQLEQELEELKLVRRPE.

The protein belongs to the GreA/GreB family.

In terms of biological role, necessary for efficient RNA polymerase transcription elongation past template-encoded arresting sites. The arresting sites in DNA have the property of trapping a certain fraction of elongating RNA polymerases that pass through, resulting in locked ternary complexes. Cleavage of the nascent transcript by cleavage factors such as GreA or GreB allows the resumption of elongation from the new 3'terminus. GreA releases sequences of 2 to 3 nucleotides. The sequence is that of Transcription elongation factor GreA from Streptococcus mutans serotype c (strain ATCC 700610 / UA159).